A 639-amino-acid polypeptide reads, in one-letter code: Chaperone protein HtpG (639 aa).

The segment at 1–343 is a; substrate-binding; that stretch reads MEATATKEHL…SNDLPLNVSR (343 aa). The segment at 344–564 is b; sequence EILQESKDIE…THDMSGNLER (221 aa). Positions 565 to 639 are c; that stretch reads LLKSAGQKVT…QLFLSTGSKE (75 aa).

Belongs to the heat shock protein 90 family. In terms of assembly, homodimer.

The protein localises to the cytoplasm. In terms of biological role, molecular chaperone. Has ATPase activity. The sequence is that of Chaperone protein HtpG from Nitrosospira multiformis (strain ATCC 25196 / NCIMB 11849 / C 71).